The following is a 145-amino-acid chain: Probable transport accessory protein MmpS2 (145 aa).

The helical transmembrane segment at 11–31 (MWLLLAIVVVAVVGGLGIYRL) threads the bilayer.

This sequence belongs to the MmpS family.

It localises to the cell membrane. In Mycobacterium bovis (strain ATCC BAA-935 / AF2122/97), this protein is Probable transport accessory protein MmpS2 (mmpS2).